Consider the following 157-residue polypeptide: Heat shock protein beta-9 (157 aa).

Positions 1–17 (MQRVGSSLPSGSQSASQ) are enriched in low complexity. 2 disordered regions span residues 1-20 (MQRV…QCPS) and 136-157 (PPSE…KKLA). The sHSP domain occupies 35–148 (QRLTEDAAAV…EAQTGPASRF (114 aa)). A compositionally biased stretch (basic residues) spans 148–157 (FRSRGSKKLA).

It belongs to the small heat shock protein (HSP20) family.

Its subcellular location is the cytoplasm. The protein resides in the nucleus. This chain is Heat shock protein beta-9 (HSPB9), found in Bos taurus (Bovine).